The chain runs to 860 residues: Eukaryotic translation initiation factor 3 subunit C (860 aa).

Positions 1–76 (MSRFFYGNDS…SEESEEEDVV (76 aa)) are disordered. The segment covering 10–51 (SDSDSSGSDEEELYSDEEVEQSEEESSEEDASSEEESSEDED) has biased composition (acidic residues). The 175-residue stretch at 599–773 (FHMHINLELL…DAIVFRKGVE (175 aa)) folds into the PCI domain. The disordered stretch occupies residues 812–860 (RDQGAGARGGRGPRGGGQARGGPRLPGGQQRRPGGQQFGGGALGGAIKA). Gly residues predominate over residues 817–831 (GARGGRGPRGGGQAR). The segment covering 832–846 (GGPRLPGGQQRRPGG) has biased composition (low complexity). Over residues 847–860 (QQFGGGALGGAIKA) the composition is skewed to gly residues.

The protein belongs to the eIF-3 subunit C family. As to quaternary structure, component of the eukaryotic translation initiation factor 3 (eIF-3) complex.

It localises to the cytoplasm. Its function is as follows. Component of the eukaryotic translation initiation factor 3 (eIF-3) complex, which is involved in protein synthesis of a specialized repertoire of mRNAs and, together with other initiation factors, stimulates binding of mRNA and methionyl-tRNAi to the 40S ribosome. The eIF-3 complex specifically targets and initiates translation of a subset of mRNAs involved in cell proliferation. The chain is Eukaryotic translation initiation factor 3 subunit C (nip1) from Emericella nidulans (strain FGSC A4 / ATCC 38163 / CBS 112.46 / NRRL 194 / M139) (Aspergillus nidulans).